Reading from the N-terminus, the 649-residue chain is Macrolide export ATP-binding/permease protein MacB (649 aa).

Residues 7–245 (IELKNIVRRY…SSAQEVTPQL (239 aa)) form the ABC transporter domain. 43–50 (GASGSGKS) is an ATP binding site. 4 consecutive transmembrane segments (helical) span residues 276–296 (LLTM…IALG), 529–549 (IAFI…LVSV), 582–602 (LLGG…FSAF), and 612–632 (FSSF…FGYF).

Belongs to the ABC transporter superfamily. Macrolide exporter (TC 3.A.1.122) family. In terms of assembly, homodimer. Part of the tripartite efflux system MacAB-TolC, which is composed of an inner membrane transporter, MacB, a periplasmic membrane fusion protein, MacA, and an outer membrane component, TolC. The complex forms a large protein conduit and can translocate molecules across both the inner and outer membranes. Interacts with MacA.

Its subcellular location is the cell inner membrane. Part of the tripartite efflux system MacAB-TolC. MacB is a non-canonical ABC transporter that contains transmembrane domains (TMD), which form a pore in the inner membrane, and an ATP-binding domain (NBD), which is responsible for energy generation. Confers resistance against macrolides. The sequence is that of Macrolide export ATP-binding/permease protein MacB from Pasteurella multocida (strain Pm70).